Reading from the N-terminus, the 684-residue chain is MARIKKRGESGAAKNYITRNQSLKKLQITLAEFRRLCILKGIFPRQPRHVKRANKGSTAPTTFYYTKDIAYLQHEPVLQAFRDHKAFAKKVNRAIARREWHAAKNLDENRPKYRLDHIIKERYPTFVDSLRDLDDALSTLFLFANIPSQKSMAPEITAHCARLCAEWQLYVMRTHCLSKVFLSIKGIYFQAVVHGQEITWLVPYMFTQTIPTDVDFRVMMTFLELYQTLMGFVLFKLYTDENLVYPPKLDESLDNQGAGFGSLMLMAADADVLTGKHSLRPMDDAAAAEASSNAITRKDGKKLSTRDVKRQIAQLTRSEDKAEHEPEDDESMPALDATMQDQDSDEEADDEAGAADAFVAHASKTQGAGADQLTTLRDLQKQAGEDPLPMLFSRYVFYISREVPRTVFEFILRSFGASPSNVGWDPVAGAGSQVAVDDERVTHHILDRPVDGMSLDHAGHRVYIQPQWVVDCVNARQILPTDPYRPGQTLPPHLSPFVDDREVARKGGYVPEEAREKLGLEAEYVGGADEDEDEDEDEDEDEDKAGSGRGDDKNVAAREQDAVEKHDKTPARPALEALLADPTGAGLLEAAELEAEATGGEDALLDLRAKHAASLKSHKKKKRTSTTQSPQLSEEAEARDMAKTLLSNKQRKLYTRMGQATGKKKEEKMRLEAKKRALSKNKKP.

The disordered stretch occupies residues 284 to 352; the sequence is DAAAAEASSN…DSDEEADDEA (69 aa). A compositionally biased stretch (low complexity) spans 285–294; sequence AAAAEASSNA. The span at 296–310 shows a compositional bias: basic and acidic residues; it reads TRKDGKKLSTRDVKR. Positions 342–352 are enriched in acidic residues; sequence QDSDEEADDEA. The BRCT domain occupies 387–486; that stretch reads PLPMLFSRYV…QILPTDPYRP (100 aa). 2 disordered regions span residues 508-580 and 612-684; these read GYVP…ALLA and AASL…NKKP. The span at 528 to 543 shows a compositional bias: acidic residues; it reads ADEDEDEDEDEDEDED. The span at 544-570 shows a compositional bias: basic and acidic residues; it reads KAGSGRGDDKNVAAREQDAVEKHDKTP. Positions 612–624 are enriched in basic residues; it reads AASLKSHKKKKRT. A compositionally biased stretch (basic and acidic residues) spans 663-675; it reads KKKEEKMRLEAKK.

It belongs to the pescadillo family. Component of the NOP7 complex, composed of ERB1, NOP7 and YTM1. The complex is held together by ERB1, which interacts with NOP7 via its N-terminal domain and with YTM1 via a high-affinity interaction between the seven-bladed beta-propeller domains of the 2 proteins. The NOP7 complex associates with the 66S pre-ribosome.

Its subcellular location is the nucleus. It localises to the nucleolus. The protein localises to the nucleoplasm. In terms of biological role, component of the NOP7 complex, which is required for maturation of the 25S and 5.8S ribosomal RNAs and formation of the 60S ribosome. The sequence is that of Pescadillo homolog from Malassezia globosa (strain ATCC MYA-4612 / CBS 7966) (Dandruff-associated fungus).